A 513-amino-acid polypeptide reads, in one-letter code: Abl interactor 2 (513 aa).

The residue at position 40 (S40) is a Phosphoserine. Residues 45-107 enclose the t-SNARE coiled-coil homology domain; that stretch reads RALEETKAYT…DIHKEKVARR (63 aa). The interval 167-431 is disordered; that stretch reads KMGGLPRTTP…PPEDYEEEEA (265 aa). Positions 174 to 185 are enriched in pro residues; sequence TTPPTQKPPSPP. 2 positions are modified to phosphoserine: S183 and S227. Over residues 217–241 the composition is skewed to polar residues; sequence PTRNMAPSQQSPVRTASVNQRNRTY. The span at 242–272 shows a compositional bias: low complexity; it reads SSSGSSGGSHPSSRSSSRENSGSGSVGVPIA. Over residues 273 to 282 the composition is skewed to pro residues; the sequence is VPTPSPPSVF. A compositionally biased stretch (low complexity) spans 283 to 325; the sequence is PAPAGSAGTPPLPATSASAPAPLVPATVPSSTAPNAAAGGAPN. T361 carries the post-translational modification Phosphothreonine. Residue S368 is modified to Phosphoserine. Positions 376–399 are enriched in polar residues; that stretch reads SITSQTSLQNQMNGGPFYSQNPVS. The span at 400-409 shows a compositional bias: pro residues; that stretch reads DTPPPPPPVE. Residues 451-510 enclose the SH3 domain; sequence SYLEKVVAIYDYTKDKEDELSFQEGAIIYVIKKNDDGWYEGVMNGVTGLFPGNYVESIMH.

It belongs to the ABI family. As to quaternary structure, component of the WAVE complex composed of ABI2, CYFIP1 or CYFIP2, BRK1, NCKAP1 and WASF1/WAVE1. Within the complex, a heterodimer containing NCKAP1 and CYFIP1 interacts with a heterotrimer formed by WAVE1, ABI2 and BRK1. CYFIP2 binds to activated RAC1 which causes the complex to dissociate, releasing activated WASF1. Interacts (via SH3 domain) with ABL1 and ABL2. (Microbial infection) Interacts with human cytomegalovirus UL135. Phosphorylated by ABL1. In terms of tissue distribution, widely expressed. Abundant in testes, ovary, thymus, and colon, with lower but detectable levels in prostate, peripheral blood leukocytes, and spleen.

It is found in the cytoplasm. It localises to the nucleus. The protein resides in the cell projection. Its subcellular location is the lamellipodium. The protein localises to the filopodium. It is found in the cytoskeleton. It localises to the cell junction. The protein resides in the adherens junction. In terms of biological role, regulator of actin cytoskeleton dynamics underlying cell motility and adhesion. Functions as a component of the WAVE complex, which activates actin nucleating machinery Arp2/3 to drive lamellipodia formation. Acts as a regulator and substrate of nonreceptor tyrosine kinases ABL1 and ABL2 involved in processes linked to cell growth and differentiation. Positively regulates ABL1-mediated phosphorylation of ENAH, which is required for proper polymerization of nucleated actin filaments at the leading edge. Contributes to the regulation of actin assembly at the tips of neuron projections. In particular, controls dendritic spine morphogenesis and may promote dendritic spine specification toward large mushroom-type spines known as repositories of memory in the brain. In hippocampal neurons, may mediate actin-dependent BDNF-NTRK2 early endocytic trafficking that triggers dendrite outgrowth. Participates in ocular lens morphogenesis, likely by regulating lamellipodia-driven adherens junction formation at the epithelial cell-secondary lens fiber interface. Also required for nascent adherens junction assembly in epithelial cells. The protein is Abl interactor 2 of Homo sapiens (Human).